We begin with the raw amino-acid sequence, 61 residues long: Metallothionein-1B (61 aa).

The tract at residues 1-29 is beta; the sequence is MDPNCSCPTSGSCSCAGSCTCKACRCPSC. A divalent metal cation-binding residues include Cys5, Cys7, Cys13, Cys15, Cys19, Cys21, Cys24, Cys26, Cys29, Cys33, Cys34, Cys36, Cys37, Cys41, Cys44, Cys48, Cys50, Cys57, Cys59, and Cys60. The segment at 30 to 61 is alpha; that stretch reads KKSCCSCCPVGCAKCAQGCVCKGASDKCSCCA.

Belongs to the metallothionein superfamily. Type 1 family.

Functionally, metallothioneins have a high content of cysteine residues that bind various heavy metals; these proteins are transcriptionally regulated by both heavy metals and glucocorticoids. This is Metallothionein-1B (MT1B) from Ovis aries (Sheep).